The primary structure comprises 400 residues: 3-hydroxykynurenine transaminase (400 aa).

The interval 43–44 is binds to and confers specificity for 3-hydroxykynurenine; shared with dimeric partner; that stretch reads SN. Pyridoxal 5'-phosphate-binding positions include 77–79, Ser154, and Gln204; that span reads SAH. Residue Ser154 participates in substrate binding. The residue at position 205 (Lys205) is an N6-(pyridoxal phosphate)lysine. Positions 256 and 259 each coordinate pyridoxal 5'-phosphate. Arg356 is a binding site for substrate.

The protein belongs to the class-V pyridoxal-phosphate-dependent aminotransferase family. Homodimer. May form homotetramer. It depends on pyridoxal 5'-phosphate as a cofactor.

The protein localises to the peroxisome. The enzyme catalyses glyoxylate + L-alanine = glycine + pyruvate. It catalyses the reaction L-kynurenine + glyoxylate = kynurenate + glycine + H2O. It carries out the reaction 3-hydroxy-L-kynurenine + glyoxylate = xanthurenate + glycine + H2O. The catalysed reaction is 3-hydroxy-L-kynurenine + pyruvate = xanthurenate + L-alanine + H2O. The enzyme catalyses L-kynurenine + pyruvate = kynurenate + L-alanine + H2O. It catalyses the reaction 2-oxobutanoate + L-alanine = (2S)-2-aminobutanoate + pyruvate. It carries out the reaction L-phenylalanine + pyruvate = 3-phenylpyruvate + L-alanine. The catalysed reaction is L-serine + pyruvate = 3-hydroxypyruvate + L-alanine. The enzyme catalyses L-cysteine + pyruvate = 2-oxo-3-sulfanylpropanoate + L-alanine. It catalyses the reaction 3-hydroxy-L-kynurenine + oxaloacetate = 4-(2-amino-3-hydroxyphenyl)-2,4-dioxobutanoate + L-aspartate. It carries out the reaction 3-hydroxy-L-kynurenine + 3-phenylpyruvate = 4-(2-amino-3-hydroxyphenyl)-2,4-dioxobutanoate + L-phenylalanine. The catalysed reaction is L-kynurenine + oxaloacetate = 4-(2-aminophenyl)-2,4-dioxobutanoate + L-aspartate. The enzyme catalyses 3-phenylpyruvate + L-kynurenine = 4-(2-aminophenyl)-2,4-dioxobutanoate + L-phenylalanine. Its pathway is amino-acid degradation; L-kynurenine degradation; kynurenate from L-kynurenine: step 1/2. Catalyzes the pyridoxal 5'-phosphate-dependent transamination of both 3-hydroxykynurenine and L-kynurenine to xanthurenic acid and kynurenic acid, respectively, preferentially using the alpha-ketoacid pyruvate, glyoxylate or oxaloacetate as the amino group acceptor. The affinity and catalytic efficiency for 3-hydroxykynurenine is higher than for L-kynurenine. Involved in the detoxification of cytotoxic metabolite 3-hydroxykynurenine generated by the hydroxylation of L-kynurenine, an intermediate in the tryptophan catabolism pathway. Also catalyzes, although with a lesser efficiency, the transamination of alanine with glyoxylate as an amino group acceptor. May play a role in the detoxification of glyoxylate, a toxic plant metabolite from the diet. The polypeptide is 3-hydroxykynurenine transaminase (Aedes aegypti (Yellowfever mosquito)).